A 248-amino-acid chain; its full sequence is MNTSRWLTALCLAASMPAYAASAFKPIEMSDAELAELRGRFVMPGRIISFGIVMSTTWTNAAGDTSTVSANMHIDSSTITPQFYVQSTGSVGNGTNRDPGTGTVVGGAGLGSGQGVTQTVRAAGDGNTAYNNVGINVSENGLSPANVAQSGHALMAGGSFTTESAAGRVSVSANNGGVQMAIAAHNNQGNALQQIGGGNVLQGTVLQGNSNFVNNMTQLNVALGNNGLNAGALNCNLDQLKGLRTLGY.

Positions Met-1–Ala-20 are cleaved as a signal peptide.

The protein belongs to the FapE family. In terms of assembly, a minor component of purified amyloid fibrils. Fibrils are resistant to boiling in 2% (weight/vol) SDS and require &gt;90% (vol/vol) formic acid to dissolve.

It localises to the fimbrium. Its subcellular location is the secreted. Functionally, a minor component of the functional amyloid in this bacterium. Upon overexpression of the endogenous six-gene locus (fapA-fapF) in situ, cells form large clumps during liquid growth, make large amounts of biofilm and produce amyloid fibrils. Expression of the 6 gene operon in E.coli strain BL21(DE3) induces flocculation and biofilm formation with copious extracellular fibrils. The chain is Functional amyloid sbunit FapE from Pseudomonas fluorescens.